We begin with the raw amino-acid sequence, 360 residues long: Probable dual-specificity RNA methyltransferase RlmN (360 aa).

The Proton acceptor role is filled by E91. A Radical SAM core domain is found at 97–335 (QHYGQSVCVT…CVVRQEHGTD (239 aa)). A disulfide bridge connects residues C104 and C340. Residues C111, C115, and C118 each coordinate [4Fe-4S] cluster. S-adenosyl-L-methionine-binding positions include 163–164 (GE), S195, 218–220 (SLH), and N296. The active-site S-methylcysteine intermediate is C340.

It belongs to the radical SAM superfamily. RlmN family. The cofactor is [4Fe-4S] cluster.

The protein resides in the cytoplasm. It catalyses the reaction adenosine(2503) in 23S rRNA + 2 reduced [2Fe-2S]-[ferredoxin] + 2 S-adenosyl-L-methionine = 2-methyladenosine(2503) in 23S rRNA + 5'-deoxyadenosine + L-methionine + 2 oxidized [2Fe-2S]-[ferredoxin] + S-adenosyl-L-homocysteine. It carries out the reaction adenosine(37) in tRNA + 2 reduced [2Fe-2S]-[ferredoxin] + 2 S-adenosyl-L-methionine = 2-methyladenosine(37) in tRNA + 5'-deoxyadenosine + L-methionine + 2 oxidized [2Fe-2S]-[ferredoxin] + S-adenosyl-L-homocysteine. Specifically methylates position 2 of adenine 2503 in 23S rRNA and position 2 of adenine 37 in tRNAs. This is Probable dual-specificity RNA methyltransferase RlmN from Streptococcus equi subsp. zooepidemicus (strain H70).